Reading from the N-terminus, the 675-residue chain is Heat shock 70 kDa protein, mitochondrial (675 aa).

Residues 1–52 (MAATLLRSLQRRNLSSSSVSAFRSLTGSTKTSYATHKLASLTRPFSSRPAGN) constitute a mitochondrion transit peptide. The disordered stretch occupies residues 639-675 (VSKIGQHMSGGSSGGPSEGGSQGGEQAPEAEYEEVKK). The span at 649-661 (GSSGGPSEGGSQG) shows a compositional bias: gly residues. Over residues 666-675 (PEAEYEEVKK) the composition is skewed to acidic residues.

This sequence belongs to the heat shock protein 70 family.

It localises to the mitochondrion. The sequence is that of Heat shock 70 kDa protein, mitochondrial (HSP1) from Pisum sativum (Garden pea).